The chain runs to 366 residues: Beta sliding clamp (366 aa).

The protein belongs to the beta sliding clamp family. As to quaternary structure, forms a ring-shaped head-to-tail homodimer around DNA which binds and tethers DNA polymerases and other proteins to the DNA. The DNA replisome complex has a single clamp-loading complex (3 tau and 1 each of delta, delta', psi and chi subunits) which binds 3 Pol III cores (1 core on the leading strand and 2 on the lagging strand) each with a beta sliding clamp dimer. Additional proteins in the replisome are other copies of gamma, psi and chi, Ssb, DNA helicase and RNA primase.

The protein resides in the cytoplasm. Its function is as follows. Confers DNA tethering and processivity to DNA polymerases and other proteins. Acts as a clamp, forming a ring around DNA (a reaction catalyzed by the clamp-loading complex) which diffuses in an ATP-independent manner freely and bidirectionally along dsDNA. Initially characterized for its ability to contact the catalytic subunit of DNA polymerase III (Pol III), a complex, multichain enzyme responsible for most of the replicative synthesis in bacteria; Pol III exhibits 3'-5' exonuclease proofreading activity. The beta chain is required for initiation of replication as well as for processivity of DNA replication. The protein is Beta sliding clamp (dnaN) of Haemophilus influenzae (strain ATCC 51907 / DSM 11121 / KW20 / Rd).